The primary structure comprises 246 residues: 1-(5-phosphoribosyl)-5-[(5-phosphoribosylamino)methylideneamino] imidazole-4-carboxamide isomerase (246 aa).

Residue Asp-8 is the Proton acceptor of the active site. The Proton donor role is filled by Asp-131.

Belongs to the HisA/HisF family.

The protein resides in the cytoplasm. It carries out the reaction 1-(5-phospho-beta-D-ribosyl)-5-[(5-phospho-beta-D-ribosylamino)methylideneamino]imidazole-4-carboxamide = 5-[(5-phospho-1-deoxy-D-ribulos-1-ylimino)methylamino]-1-(5-phospho-beta-D-ribosyl)imidazole-4-carboxamide. It functions in the pathway amino-acid biosynthesis; L-histidine biosynthesis; L-histidine from 5-phospho-alpha-D-ribose 1-diphosphate: step 4/9. This is 1-(5-phosphoribosyl)-5-[(5-phosphoribosylamino)methylideneamino] imidazole-4-carboxamide isomerase from Lactococcus lactis subsp. cremoris (strain SK11).